The sequence spans 218 residues: Ribose-5-phosphate isomerase A (218 aa).

Substrate contacts are provided by residues 28–31 (TGST), 81–84 (DGAD), and 94–97 (KGGG). Glu103 acts as the Proton acceptor in catalysis. Lys121 is a binding site for substrate.

This sequence belongs to the ribose 5-phosphate isomerase family. In terms of assembly, homodimer.

The catalysed reaction is aldehydo-D-ribose 5-phosphate = D-ribulose 5-phosphate. It participates in carbohydrate degradation; pentose phosphate pathway; D-ribose 5-phosphate from D-ribulose 5-phosphate (non-oxidative stage): step 1/1. Functionally, catalyzes the reversible conversion of ribose-5-phosphate to ribulose 5-phosphate. The chain is Ribose-5-phosphate isomerase A from Shewanella piezotolerans (strain WP3 / JCM 13877).